The chain runs to 114 residues: Large ribosomal subunit protein uL22 (114 aa).

Belongs to the universal ribosomal protein uL22 family. In terms of assembly, part of the 50S ribosomal subunit.

Functionally, this protein binds specifically to 23S rRNA; its binding is stimulated by other ribosomal proteins, e.g. L4, L17, and L20. It is important during the early stages of 50S assembly. It makes multiple contacts with different domains of the 23S rRNA in the assembled 50S subunit and ribosome. In terms of biological role, the globular domain of the protein is located near the polypeptide exit tunnel on the outside of the subunit, while an extended beta-hairpin is found that lines the wall of the exit tunnel in the center of the 70S ribosome. The chain is Large ribosomal subunit protein uL22 from Streptococcus pyogenes serotype M6 (strain ATCC BAA-946 / MGAS10394).